The sequence spans 197 residues: Imidazoleglycerol-phosphate dehydratase (197 aa).

The protein belongs to the imidazoleglycerol-phosphate dehydratase family.

Its subcellular location is the cytoplasm. It carries out the reaction D-erythro-1-(imidazol-4-yl)glycerol 3-phosphate = 3-(imidazol-4-yl)-2-oxopropyl phosphate + H2O. The protein operates within amino-acid biosynthesis; L-histidine biosynthesis; L-histidine from 5-phospho-alpha-D-ribose 1-diphosphate: step 6/9. The polypeptide is Imidazoleglycerol-phosphate dehydratase (Pseudomonas putida (strain W619)).